The primary structure comprises 146 residues: uncharacterized protein (146 aa).

This is an uncharacterized protein from Sinorhizobium fredii (strain NBRC 101917 / NGR234).